The primary structure comprises 661 residues: Peroxisomal acyl-coenzyme A oxidase 1 (661 aa).

At Ser-26 the chain carries Phosphoserine. Position 65 is an N6-acetyllysine (Lys-65). N6-succinyllysine occurs at positions 89 and 90. Thr-139 is an FAD binding site. Residue Lys-159 is modified to N6-succinyllysine. Residue Gly-178 participates in FAD binding. At Lys-216 the chain carries N6-acetyllysine. N6-succinyllysine is present on Lys-241. N6-acetyllysine is present on residues Lys-255, Lys-267, and Lys-272. Position 349 is an N6-succinyllysine (Lys-349). Glu-421 (proton acceptor) is an active-site residue. N6-acetyllysine; alternate is present on residues Lys-437 and Lys-446. N6-succinyllysine; alternate is present on residues Lys-437 and Lys-446. Lys-500 is subject to N6-acetyllysine. The residue at position 512 (Lys-512) is an N6-acetyllysine; alternate. Lys-512 bears the N6-succinyllysine; alternate mark. An N6-succinyllysine modification is found at Lys-542. Position 637 is an N6-acetyllysine; alternate (Lys-637). Lys-637 bears the N6-succinyllysine; alternate mark. Lys-643 is subject to N6-succinyllysine. Ser-649 is modified (phosphoserine). Position 652 is an N6-acetyllysine (Lys-652). Residue Lys-655 is modified to N6-succinyllysine. A Microbody targeting signal motif is present at residues 659 to 661 (SKL).

Belongs to the acyl-CoA oxidase family. Homodimer. The enzyme contains three components A, B and C, the latter two being produced from the first by a proteolytic cleavage. Interacts with LONP2. FAD serves as cofactor. In terms of tissue distribution, expressed in Schwann cells. Expressed (at protein level) in liver.

It localises to the peroxisome. It carries out the reaction a 2,3-saturated acyl-CoA + O2 = a (2E)-enoyl-CoA + H2O2. It catalyses the reaction hexadecanoyl-CoA + O2 = (2E)-hexadecenoyl-CoA + H2O2. The enzyme catalyses dodecanoyl-CoA + O2 = (2E)-dodecenoyl-CoA + H2O2. The catalysed reaction is octanoyl-CoA + O2 = (2E)-octenoyl-CoA + H2O2. It carries out the reaction decanoyl-CoA + O2 = (2E)-decenoyl-CoA + H2O2. It catalyses the reaction tetradecanoyl-CoA + O2 = (2E)-tetradecenoyl-CoA + H2O2. The enzyme catalyses hexadecanedioyl-CoA + O2 = (2E)-hexadecenedioyl-CoA + H2O2. The catalysed reaction is tetracosanoyl-CoA + O2 = (2E)-tetracosenoyl-CoA + H2O2. It carries out the reaction glutaryl-CoA + O2 = (2E)-glutaconyl-CoA + H2O2. It catalyses the reaction hexanoyl-CoA + O2 = (2E)-hexenoyl-CoA + H2O2. The enzyme catalyses octadecanoyl-CoA + O2 = (2E)-octadecenoyl-CoA + H2O2. The catalysed reaction is (5Z,8Z,11Z,14Z,17Z)-eicosapentaenoyl-CoA + O2 = (2E,5Z,8Z,11Z,14Z,17Z)-icosahexaenoyl-CoA + H2O2. It carries out the reaction (6Z,9Z,12Z,15Z,18Z,21Z)-tetracosahexaenoyl-CoA + O2 = (2E,6Z,9Z,12Z,15Z,18Z,21Z)-tetracosaheptaenoyl-CoA + H2O2. It participates in lipid metabolism; peroxisomal fatty acid beta-oxidation. In terms of biological role, involved in the initial and rate-limiting step of peroxisomal beta-oxidation of straight-chain saturated and unsaturated very-long-chain fatty acids. Catalyzes the desaturation of fatty acyl-CoAs such as palmitoyl-CoA (hexadecanoyl-CoA) to 2-trans-enoyl-CoAs ((2E)-enoyl-CoAs) such as (2E)-hexadecenoyl-CoA, and donates electrons directly to molecular oxygen (O(2)), thereby producing hydrogen peroxide (H(2)O(2)). Shows highest activity against medium-chain fatty acyl-CoAs. Shows optimum activity with a chain length of 10 carbons (decanoyl-CoA) in vitro. Functionally, is active against a much broader range of substrates and shows activity towards long-chain acyl-CoAs. This is Peroxisomal acyl-coenzyme A oxidase 1 from Rattus norvegicus (Rat).